We begin with the raw amino-acid sequence, 387 residues long: Transcription termination/antitermination protein NusA (387 aa).

In terms of domain architecture, S1 motif spans 145–209 (GQVLTGVVTR…AKGPSLLVSR (65 aa)). One can recognise a KH domain in the interval 312–379 (AKKARVKVTK…ARERKAREEF (68 aa)).

The protein belongs to the NusA family. As to quaternary structure, monomer. Binds directly to the core enzyme of the DNA-dependent RNA polymerase and to nascent RNA.

The protein resides in the cytoplasm. Participates in both transcription termination and antitermination. This chain is Transcription termination/antitermination protein NusA, found in Thermus thermophilus (strain ATCC 27634 / DSM 579 / HB8).